The following is a 282-amino-acid chain: Protease HtpX homolog (282 aa).

Helical transmembrane passes span 6 to 26 and 29 to 49; these read TLVL…LIGG and GATF…FFSH. His-130 contacts Zn(2+). Glu-131 is an active-site residue. His-134 contacts Zn(2+). The next 2 membrane-spanning stretches (helical) occupy residues 140 to 160 and 180 to 200; these read ILIS…AQMA and IVAL…QLAI. Residue Glu-205 coordinates Zn(2+).

The protein belongs to the peptidase M48B family. Requires Zn(2+) as cofactor.

Its subcellular location is the cell inner membrane. The chain is Protease HtpX homolog from Thermodesulfovibrio yellowstonii (strain ATCC 51303 / DSM 11347 / YP87).